The primary structure comprises 691 residues: DNA ligase (691 aa).

Residues 36 to 40 (DAEYD), 85 to 86 (SL), and Glu-118 each bind NAD(+). The active-site N6-AMP-lysine intermediate is the Lys-120. Residues Arg-141, Glu-178, Lys-295, and Lys-319 each coordinate NAD(+). 4 residues coordinate Zn(2+): Cys-413, Cys-416, Cys-431, and Cys-437. The BRCT domain maps to 595 to 684 (GRPQPLAGQT…ESASSEDAQP (90 aa)).

It belongs to the NAD-dependent DNA ligase family. LigA subfamily. Requires Mg(2+) as cofactor. The cofactor is Mn(2+).

The enzyme catalyses NAD(+) + (deoxyribonucleotide)n-3'-hydroxyl + 5'-phospho-(deoxyribonucleotide)m = (deoxyribonucleotide)n+m + AMP + beta-nicotinamide D-nucleotide.. Functionally, DNA ligase that catalyzes the formation of phosphodiester linkages between 5'-phosphoryl and 3'-hydroxyl groups in double-stranded DNA using NAD as a coenzyme and as the energy source for the reaction. It is essential for DNA replication and repair of damaged DNA. The sequence is that of DNA ligase from Chromohalobacter salexigens (strain ATCC BAA-138 / DSM 3043 / CIP 106854 / NCIMB 13768 / 1H11).